The chain runs to 391 residues: Trehalose-phosphate phosphatase (391 aa).

Catalysis depends on Asp147, which acts as the Nucleophile. The Mg(2+) site is built by Asp147, Asp149, and Asp330. 147–149 contacts substrate; sequence DFD.

It belongs to the trehalose phosphatase family. Mg(2+) serves as cofactor.

The catalysed reaction is alpha,alpha-trehalose 6-phosphate + H2O = alpha,alpha-trehalose + phosphate. It participates in glycan biosynthesis; trehalose biosynthesis. In terms of biological role, removes the phosphate from trehalose 6-phosphate to produce free trehalose. In Mycolicibacterium paratuberculosis (strain ATCC BAA-968 / K-10) (Mycobacterium paratuberculosis), this protein is Trehalose-phosphate phosphatase (otsB).